We begin with the raw amino-acid sequence, 120 residues long: Ubiquitin domain-containing protein TINCR (120 aa).

A Ubiquitin-like domain is found at 14–83 (YHIKVHLADE…LQDGSVLLLV (70 aa)).

Detected in stratum corneum (at protein level).

This chain is Ubiquitin domain-containing protein TINCR, found in Homo sapiens (Human).